Consider the following 691-residue polypeptide: Protein phosphatase 1 regulatory subunit 37 (691 aa).

The segment at 1-43 (MEIAPQEAPPVPGADGDIEEAPAEAGSPSPASPPADGRLKAAA) is disordered. Phosphoserine is present on residues Ser50 and Ser56. LRR repeat units follow at residues 220–240 (SLAVLHLENASLSGRPLMLLA), 248–269 (NLRELYLADNKLNGLQDSAQLG), 277–297 (SLQILDLRNNHVLDSGLAYIC), 306–326 (GLVTLVLWNNQLTHTGMAFLG), and 334–354 (SLETLNLGHNPIGNEGVRHLK). The segment at 460–662 (EREEKEQPPQ…PEVKGGSCGL (203 aa)) is disordered. Positions 468–481 (PQLSASMPETTATE) are enriched in polar residues. The segment covering 505–523 (SDSDSDSDGEEEEEEEGER) has biased composition (acidic residues). The residue at position 561 (Ser561) is a Phosphoserine. Pro residues-rich tracts occupy residues 584–605 (PASPTPPSPPPPPSPPASPSLP) and 620–634 (PQPPPEPPRSGPPLP).

This sequence belongs to the PPP1R37 family. Interacts with PPP1CA.

Its function is as follows. Inhibits phosphatase activity of protein phosphatase 1 (PP1) complexes. In Homo sapiens (Human), this protein is Protein phosphatase 1 regulatory subunit 37 (PPP1R37).